The chain runs to 177 residues: MIDDDGYRPNVGIVICNRQGQVMWARRFGQHSWQFPQGGINPGESAEQAMYRELFEEVGLQRKDVRILATTRNWLRYKLPKRLVRWDTKPVCIGQKQKWFLLQLMSNDADINMQTSSTPEFDGWRWVSFWYPVRQVVSFKRDVYRRVMKEFASVVMPLQESAPPQRNPSPAWRRKRG.

The Nudix hydrolase domain maps to 6-149 (GYRPNVGIVI…KRDVYRRVMK (144 aa)). A Nudix box motif is present at residues 38 to 59 (GGINPGESAEQAMYRELFEEVG).

This sequence belongs to the Nudix hydrolase family. RppH subfamily. The cofactor is a divalent metal cation.

Its function is as follows. Accelerates the degradation of transcripts by removing pyrophosphate from the 5'-end of triphosphorylated RNA, leading to a more labile monophosphorylated state that can stimulate subsequent ribonuclease cleavage. In Cronobacter sakazakii (strain ATCC BAA-894) (Enterobacter sakazakii), this protein is RNA pyrophosphohydrolase.